The chain runs to 287 residues: Putative S-adenosyl-L-methionine-dependent methyltransferase SACE_1742 (287 aa).

Residues Asp-119 and Asp-148–Leu-149 each bind S-adenosyl-L-methionine.

It belongs to the UPF0677 family.

Its function is as follows. Exhibits S-adenosyl-L-methionine-dependent methyltransferase activity. The chain is Putative S-adenosyl-L-methionine-dependent methyltransferase SACE_1742 from Saccharopolyspora erythraea (strain ATCC 11635 / DSM 40517 / JCM 4748 / NBRC 13426 / NCIMB 8594 / NRRL 2338).